A 336-amino-acid chain; its full sequence is Tetraacyldisaccharide 4'-kinase (336 aa).

60–67 (TVGGTGKT) is a binding site for ATP.

This sequence belongs to the LpxK family.

The enzyme catalyses a lipid A disaccharide + ATP = a lipid IVA + ADP + H(+). It functions in the pathway glycolipid biosynthesis; lipid IV(A) biosynthesis; lipid IV(A) from (3R)-3-hydroxytetradecanoyl-[acyl-carrier-protein] and UDP-N-acetyl-alpha-D-glucosamine: step 6/6. Transfers the gamma-phosphate of ATP to the 4'-position of a tetraacyldisaccharide 1-phosphate intermediate (termed DS-1-P) to form tetraacyldisaccharide 1,4'-bis-phosphate (lipid IVA). The chain is Tetraacyldisaccharide 4'-kinase from Pseudomonas entomophila (strain L48).